Consider the following 203-residue polypeptide: Holliday junction branch migration complex subunit RuvA (203 aa).

The segment at 1–64 is domain I; the sequence is MIGRLRGIIL…EDAQLLYGFN (64 aa). A domain II region spans residues 65-142; sequence NKQERTLFKE…KGLHGDLFTP (78 aa). Residues 143–154 form a flexible linker region; the sequence is AVDLVLTSPASP. Residues 155–203 are domain III; it reads TSEDAEQEAVAALVALGYKPQEASRMVSKIARPDASSETLIRDALRAAL.

It belongs to the RuvA family. In terms of assembly, homotetramer. Forms an RuvA(8)-RuvB(12)-Holliday junction (HJ) complex. HJ DNA is sandwiched between 2 RuvA tetramers; dsDNA enters through RuvA and exits via RuvB. An RuvB hexamer assembles on each DNA strand where it exits the tetramer. Each RuvB hexamer is contacted by two RuvA subunits (via domain III) on 2 adjacent RuvB subunits; this complex drives branch migration. In the full resolvosome a probable DNA-RuvA(4)-RuvB(12)-RuvC(2) complex forms which resolves the HJ.

It localises to the cytoplasm. Functionally, the RuvA-RuvB-RuvC complex processes Holliday junction (HJ) DNA during genetic recombination and DNA repair, while the RuvA-RuvB complex plays an important role in the rescue of blocked DNA replication forks via replication fork reversal (RFR). RuvA specifically binds to HJ cruciform DNA, conferring on it an open structure. The RuvB hexamer acts as an ATP-dependent pump, pulling dsDNA into and through the RuvAB complex. HJ branch migration allows RuvC to scan DNA until it finds its consensus sequence, where it cleaves and resolves the cruciform DNA. The polypeptide is Holliday junction branch migration complex subunit RuvA (Salmonella agona (strain SL483)).